Consider the following 314-residue polypeptide: Jacalin-related lectin 9 (314 aa).

Positions 1-23 (MIFIYIFLFLSSAIIDSNGFAMA) are cleaved as a signal peptide. Jacalin-type lectin domains follow at residues 24 to 165 (QKLE…YLTK) and 168 to 313 (PTKS…YFSP).

It belongs to the jacalin lectin family.

The chain is Jacalin-related lectin 9 (JAL9) from Arabidopsis thaliana (Mouse-ear cress).